A 166-amino-acid polypeptide reads, in one-letter code: Phosphopantetheine adenylyltransferase (166 aa).

T10 contacts substrate. Residues T10 to F11 and H18 each bind ATP. Residues K42, L75, and R89 each coordinate substrate. ATP-binding positions include G90–R92, E100, and Y125–T131.

This sequence belongs to the bacterial CoaD family. Homohexamer. The cofactor is Mg(2+).

It localises to the cytoplasm. It catalyses the reaction (R)-4'-phosphopantetheine + ATP + H(+) = 3'-dephospho-CoA + diphosphate. Its pathway is cofactor biosynthesis; coenzyme A biosynthesis; CoA from (R)-pantothenate: step 4/5. Functionally, reversibly transfers an adenylyl group from ATP to 4'-phosphopantetheine, yielding dephospho-CoA (dPCoA) and pyrophosphate. In Chlorobaculum parvum (strain DSM 263 / NCIMB 8327) (Chlorobium vibrioforme subsp. thiosulfatophilum), this protein is Phosphopantetheine adenylyltransferase.